The sequence spans 270 residues: Putative phosphoenolpyruvate synthase regulatory protein (270 aa).

An ADP-binding site is contributed by 150–157; it reads GVSRCGKT.

It belongs to the pyruvate, phosphate/water dikinase regulatory protein family. PSRP subfamily.

It carries out the reaction [pyruvate, water dikinase] + ADP = [pyruvate, water dikinase]-phosphate + AMP + H(+). The enzyme catalyses [pyruvate, water dikinase]-phosphate + phosphate + H(+) = [pyruvate, water dikinase] + diphosphate. Bifunctional serine/threonine kinase and phosphorylase involved in the regulation of the phosphoenolpyruvate synthase (PEPS) by catalyzing its phosphorylation/dephosphorylation. This is Putative phosphoenolpyruvate synthase regulatory protein from Shewanella baltica (strain OS223).